The primary structure comprises 24 residues: Defensin D5 (24 aa).

It belongs to the DEFL family. Group IV subfamily. As to expression, distributed in the epidermal cell layer of leaves and in the subepidermal layer region of stems. Not in roots.

Its subcellular location is the secreted. It is found in the cell wall. Functionally, antimicrobial peptide. Active against Fusarium spp., Gram-positive and Gram-negative bacterial pathogens. This is Defensin D5 from Spinacia oleracea (Spinach).